The following is a 368-amino-acid chain: Glycolate oxidase 3 (368 aa).

Methionine 1 carries the N-acetylmethionine modification. In terms of domain architecture, FMN hydroxy acid dehydrogenase spans 1–359 (MEITNVMEYE…SRTHIKTDWD (359 aa)). Residue tyrosine 24 participates in glyoxylate binding. FMN contacts are provided by residues 77 to 79 (PTA), serine 106, 127 to 129 (QLY), and threonine 155. Tyrosine 129 serves as a coordination point for glyoxylate. Arginine 164 provides a ligand contact to glyoxylate. Residues lysine 230 and serine 252 each coordinate FMN. Residues histidine 254 and arginine 257 each contribute to the glyoxylate site. Histidine 254 serves as the catalytic Proton acceptor. Residues 285–289 (DGGVR) and 308–309 (GR) each bind FMN.

It belongs to the FMN-dependent alpha-hydroxy acid dehydrogenase family. In terms of assembly, homotetramer. Requires FMN as cofactor.

Its subcellular location is the peroxisome. It carries out the reaction glycolate + O2 = glyoxylate + H2O2. The protein operates within photosynthesis; photorespiration; glycine from 2-phosphoglycolate: step 2/3. In terms of biological role, catalyzes the oxidation of glycolate to glyoxylate, with a reduction of O2 to H2O2. Is a key enzyme in photorespiration in green plants. The protein is Glycolate oxidase 3 (GLO5) of Arabidopsis thaliana (Mouse-ear cress).